A 25-amino-acid chain; its full sequence is Glutamine synthetase 2 isozyme (25 aa).

It belongs to the glutamine synthetase family. In terms of assembly, homohexamer.

The protein localises to the plastid. It localises to the chloroplast. The enzyme catalyses L-glutamate + NH4(+) + ATP = L-glutamine + ADP + phosphate + H(+). Plays a key role in the nitrogen metabolism of microorganisms, animals and plants. The chain is Glutamine synthetase 2 isozyme from Emiliania huxleyi (Coccolithophore).